Consider the following 397-residue polypeptide: Cathepsin E (397 aa).

Positions 1-20 (MKPLLVLLLLLLLDLAQAQG) are cleaved as a signal peptide. The propeptide at 21–59 (ALHRVPLRRHQSLRKKLRAQGQLSEFWRSHNLDMTRLSE) is activation peptide. In terms of domain architecture, Peptidase A1 spans 79 to 393 (YFGTISIGTP…DRGNNQVGLA (315 aa)). A glycan (N-linked (GlcNAc...) asparagine) is linked at asparagine 91. Aspartate 97 is an active-site residue. 2 disulfide bridges follow: cysteine 110/cysteine 115 and cysteine 273/cysteine 277. Aspartate 282 is a catalytic residue. Asparagine 323 carries an N-linked (GlcNAc...) asparagine glycan.

This sequence belongs to the peptidase A1 family. In terms of assembly, homodimer; disulfide-linked. Glycosylated. The nature of the carbohydrate chain varies between cell types. In fibroblasts, the proenzyme contains a high mannose-type oligosaccharide, while the mature enzyme contains a complex-type oligosaccharide. As to expression, expressed abundantly in the stomach, club cells and alveolar macrophages of the lung, brain microglia, spleen and activated B-lymphocytes. Not expressed in resting B-lymphocytes.

Its subcellular location is the endosome. It catalyses the reaction Similar to cathepsin D, but slightly broader specificity.. Its function is as follows. May have a role in immune function. Probably involved in the processing of antigenic peptides during MHC class II-mediated antigen presentation. May play a role in activation-induced lymphocyte depletion in the thymus, and in neuronal degeneration and glial cell activation in the brain. The sequence is that of Cathepsin E (Ctse) from Mus musculus (Mouse).